The sequence spans 793 residues: MPQVEHQNSTVLTDDELRTLDAHWRAANYLAAGQIYLLANALLTEPLSPAHIKPRLLGHWGTSPGLNLVHTHLNRVIKARDLDALCVWGPGHGGPAVLANSWLEGSYSETYPDISRDAAGMGKLFRQFSFPGGVPSHVAPETPGSIHEGGELGYSLAHAYGAAFDNPDLLVACVIGDGEAETGPLAASWHSNKFLDPVHDGAVLPILHLNGYKIANPTVLSRIPEPELDELLRGYGHEPLHVTGDDPHQVHRALAEAFDRALDRVALMQRTAREEGATERIRWPMIVLRTPKGWTGPAEVDGRPVEGTWRAHQVPLPEVRENPEHLRQLEGWLRSYRPEELFDADGRPTADVLACVPHGARRLGATPHANGGLLLRPLPIPPLDRFAVAVDKPGATLHEPTRVLGDLLEQVMKDTSARRDFRLVGPDETASNRLDAVFDASGKAWQAQTLPVDEHLDRHGRVMEILSEHTCQGWLEGYLLTGRHGLFSCYEAFVHIVDSMVNQHIKWLKTSRELAWRAPIASLNYLLTSHVWRQDHNGFSHQDPGFVDHVLNKSPEAVRVYLPPDANTLLSVADHVLRSRDYVNVVVAGKQPCFDWLSMEQARAHCARGAGIWEWAGTQNDGEPDVVLACAGDVPTQEVLAASALLRRHLPALAVRVVNVVDMTRLLPREAHPHGMSDFEYDGLFTTDKPVIFAYHGYPWLIHRLAYSRTGHGNLHVRGYKEMGTTTTPFDMVVRNDLDRYRLVMDVVDRVPGLGVRAAAVRQTMADARTRHHAWIREHGTDLPEVANWTWEA.

The protein belongs to the XFP family. It depends on thiamine diphosphate as a cofactor.

The protein is Probable phosphoketolase of Streptomyces avermitilis (strain ATCC 31267 / DSM 46492 / JCM 5070 / NBRC 14893 / NCIMB 12804 / NRRL 8165 / MA-4680).